Reading from the N-terminus, the 4043-residue chain is Hybrid PKS-NRPS synthetase thnA (4043 aa).

Residues L6–E440 enclose the Ketosynthase family 3 (KS3) domain. Residues C179, H319, and H360 each act as for beta-ketoacyl synthase activity in the active site. The interval V558–T894 is malonyl-CoA:ACP transacylase (MAT) domain. The N-terminal hotdog fold stretch occupies residues H952 to P1090. Positions H952–T1256 are dehydratase (DH) domain. One can recognise a PKS/mFAS DH domain in the interval H952–A1258. The active-site Proton acceptor; for dehydratase activity is the H984. The tract at residues L1105–A1258 is C-terminal hotdog fold. Residue D1166 is the Proton donor; for dehydratase activity of the active site. Residues L1417–A1591 are methyltransferase (MT) domain. Residues T2146–A2320 form a ketoreductase (KR) domain region. The Carrier 1 domain maps to E2434 to L2512. S2472 is subject to O-(pantetheine 4'-phosphoryl)serine. The interval G2521–R2618 is disordered. The span at Q2527–Q2536 shows a compositional bias: low complexity. Pro residues predominate over residues P2537–V2547. The segment covering Y2578 to Q2605 has biased composition (polar residues). The interval I2626–A3067 is condensation (C) domain. Positions Q3092–A3496 are adenylation (A) domain. The Carrier 2 domain maps to T3614 to I3695. S3655 is subject to O-(pantetheine 4'-phosphoryl)serine. The segment at I3736–Q3954 is reductase (R) domain.

It in the C-terminal section; belongs to the NRP synthetase family.

The catalysed reaction is malate + 6 malonyl-CoA + acetyl-CoA + 2 AH2 + 2 S-adenosyl-L-methionine + 5 NADPH + 9 H(+) = trihazone A + 2 A + 2 S-adenosyl-L-homocysteine + 6 CO2 + 5 NADP(+) + 7 CoA + 6 H2O. The protein operates within secondary metabolite biosynthesis. Functionally, hybrid PKS-NRPS synthetase; part of the gene cluster that produces the tetronate natural products trihazones. The PKS-NRPS synthetase thnA with the help of the trans-enoyl reductase thnE are responsible for the synthesis of the carboxylmethyl containing trihazone A. The PKS portion of thnA synthesizes beta-keto-triene chain from one acetyl-CoA and 6 equivalents of malonyl-CoA, in collaboration with thnE, which selectively reduces the enoyl intermediate during the first and fourth iteration of the PKS. The NRPS domain selects and activates malate, of which the alpha-hydroxyl group attacks the completed polyketide acyl-S-ACP chain to form the ester product. Intramolecular Dieckmann cyclization catalyzed by the terminal reductase domain releases the product as trihazone A from the PKS-NPRS. The pathway begins with the formation of trihazone A by the hybrid PKS-NRPS synthetase thnA and the trans-enoyl reductase thnE. Trihazone A is further decarboxylated by the 2-oxoglutarate-dependent dioxygenase thnC to produce trihazone D. The function of the FAD-dependent monooxygenase thnD has still to be identified. The sequence is that of Hybrid PKS-NRPS synthetase thnA from Trichoderma harzianum (Hypocrea lixii).